A 141-amino-acid chain; its full sequence is Secreted RxLR effector protein 69 (141 aa).

The first 19 residues, 1–19 (MHSSTILFVLGAAILAVNG), serve as a signal peptide directing secretion. Positions 38–53 (RLLRSNLMKHETGEER) match the RxLR-dEER motif. Residue N120 is glycosylated (N-linked (GlcNAc...) asparagine).

Belongs to the RxLR effector family.

Its subcellular location is the secreted. The protein resides in the host nucleus. Functionally, secreted effector that completely suppresses the host cell death induced by cell death-inducing proteins. This Plasmopara viticola (Downy mildew of grapevine) protein is Secreted RxLR effector protein 69.